We begin with the raw amino-acid sequence, 263 residues long: Receptor expression-enhancing protein 3-A (263 aa).

Helical transmembrane passes span 2–22 (VSWI…PAYF) and 35–55 (YVRW…EAIA). 2 disordered regions span residues 161-228 (GDET…SMRS) and 240-263 (YASL…AHHL). Residues 199-214 (DDNTDEDVEVNSEDEV) are compositionally biased toward acidic residues. Residues 242 to 251 (SLKHKPKKRP) are compositionally biased toward basic residues.

It belongs to the DP1 family.

Its subcellular location is the endoplasmic reticulum membrane. Microtubule-binding protein required to ensure proper cell division and nuclear envelope reassembly by sequestering the endoplasmic reticulum away from chromosomes during mitosis. Probably acts by clearing the endoplasmic reticulum membrane from metaphase chromosomes. The protein is Receptor expression-enhancing protein 3-A (reep3-a) of Xenopus laevis (African clawed frog).